Consider the following 1133-residue polypeptide: Sterol regulatory element-binding protein 1 (1133 aa).

The interval 1 to 60 (MDELPFGEAAVEQALDELGELDAALLTDIQDMLQLINNQDSDFPGLFDSPYAGGGAGDTE) is transcriptional activation (acidic). Topologically, residues 1-476 (MDELPFGEAA…HSHGMLDRSR (476 aa)) are cytoplasmic. A 9aaTAD motif is present at residues 27 to 35 (TDIQDMLQL). The interval 46–78 (LFDSPYAGGGAGDTEPTSPGANSPESLSSPASL) is disordered. Residues 68 to 78 (SPESLSSPASL) show a composition bias toward low complexity. 2 positions are modified to phosphoserine: Ser-97 and Ser-116. A disordered region spans residues 131–219 (LQPPAAQPSP…PLPASTAPRT (89 aa)). Residues 165 to 180 (SLPSGFSGTLPGNTQQ) show a composition bias toward polar residues. 2 stretches are compositionally biased toward low complexity: residues 181–191 (PPSSLSLASAP) and 203–217 (QSSASQQPLPASTAP). The segment at 227–486 (QRVPVVLQPH…LALCALVFLC (260 aa)) is interaction with LMNA. Residues 317 to 367 (EKRTAHNAIEKRYRSSINDKIVELKDLVVGTEAKLNKSAVLRKAIDYIRFL) form the bHLH domain. Ser-331 and Ser-332 each carry phosphoserine; by SIK1. Positions 367–388 (LQHSNQKLKQENLALRNAAHKS) are leucine-zipper. Position 390 is a phosphoserine; by AMPK (Ser-390). Ser-396 carries the post-translational modification Phosphoserine; by SIK1. The disordered stretch occupies residues 415-456 (VVDTLTPPPSDAGSPSQSSPLSLGSRGSSSGGSDSEPDSPVF). The segment covering 425-454 (DAGSPSQSSPLSLGSRGSSSGGSDSEPDSP) has biased composition (low complexity). Ser-449 is subject to Phosphoserine. Residues 477–497 (LALCALVFLCLTCNPLASLFG) form a helical membrane-spanning segment. At 498–535 (WGIPGPSSASGAHHSSGRSMLEAESRDGSNWTQWLLPP) the chain is on the lumenal side. A helical membrane pass occupies residues 536 to 556 (LVWLANGLLVLACLALLFVYG). At 557 to 1133 (EPVTRPHTSP…LGGGTTVTSS (577 aa)) the chain is on the cytoplasmic side. Phosphoserine is present on Ser-1046.

This sequence belongs to the SREBP family. As to quaternary structure, efficient DNA binding of the soluble transcription factor fragment requires dimerization with another bHLH protein. Interacts with CEBPA, the interaction produces a transcriptional synergy. Interacts with LMNA. In terms of assembly, forms a tight complex with SCAP, the SCAP-SREBP complex, in the endoplasmic reticulum membrane and the Golgi apparatus. Interacts with PAQR3; the interaction anchors the SCAP-SREBP complex to the Golgi apparatus in low cholesterol conditions. Processed in the Golgi apparatus, releasing the protein from the membrane. At low cholesterol the SCAP-SREBP complex is recruited into COPII vesicles for export from the endoplasmic reticulum. In the Golgi, complex SREBPs are cleaved sequentially by site-1 (MBTPS1, S1P) and site-2 (MBTPS2, S2P) proteases. The first cleavage by site-1 protease occurs within the luminal loop, the second cleavage by site-2 protease occurs within the first transmembrane domain, releasing the transcription factor from the Golgi membrane. Post-translationally, phosphorylated by AMPK, leading to suppress protein processing and nuclear translocation, and repress target gene expression. Phosphorylation at Ser-396 by SIK1 represses activity possibly by inhibiting DNA-binding. In terms of processing, SCAP-free SREBF1 is ubiquitinated by the BCR(ARMC5) complex, leading to its degradation. Ubiquitinated; the nuclear form has a rapid turnover and is rapidly ubiquitinated and degraded by the proteasome in the nucleus.

The protein resides in the endoplasmic reticulum membrane. Its subcellular location is the golgi apparatus membrane. It is found in the cytoplasmic vesicle. It localises to the COPII-coated vesicle membrane. The protein localises to the nucleus. With respect to regulation, activation by cleavage is down-regulated upon activation of SIRT3-dependent PRKAA1/AMPK-alpha signaling cascade which leads to inhibition of ATP-consuming lipogenesis to restore cellular energy balance. In terms of biological role, precursor of the transcription factor form (Processed sterol regulatory element-binding protein 1), which is embedded in the endoplasmic reticulum membrane. Low sterol concentrations promote processing of this form, releasing the transcription factor form that translocates into the nucleus and activates transcription of genes involved in cholesterol biosynthesis and lipid homeostasis. Key transcription factor that regulates expression of genes involved in cholesterol biosynthesis and lipid homeostasis. Binds to the sterol regulatory element 1 (SRE-1) (5'-ATCACCCCAC-3'). Has dual sequence specificity binding to both an E-box motif (5'-ATCACGTGA-3') and to SRE-1 (5'-ATCACCCCAC-3'). Regulates the promoters of genes involved in cholesterol biosynthesis and the LDL receptor (LDLR) pathway of sterol regulation. This chain is Sterol regulatory element-binding protein 1, found in Cricetulus griseus (Chinese hamster).